The chain runs to 156 residues: SCP2 sterol-binding domain-containing protein 1 (156 aa).

One can recognise an SCP2 domain in the interval 44 to 156 (SFPVFQDIRL…ERVFKDWAKF (113 aa)).

The sequence is that of SCP2 sterol-binding domain-containing protein 1 (SCP2D1) from Homo sapiens (Human).